A 395-amino-acid polypeptide reads, in one-letter code: Putative transport protein sll0063 (395 aa).

8 consecutive transmembrane segments (helical) span residues 24–44 (LNAI…VLNA), 50–70 (IFGY…IAFL), 91–111 (FVFL…IPLA), 180–200 (VFTV…FYLL), 245–265 (ALGL…LFGL), 269–289 (VMAL…FLVA), 295–315 (MALQ…NGIA), and 328–348 (FWVL…GVIV).

Belongs to the autoinducer-2 exporter (AI-2E) (TC 2.A.86) family.

Its subcellular location is the cell membrane. The chain is Putative transport protein sll0063 from Synechocystis sp. (strain ATCC 27184 / PCC 6803 / Kazusa).